The sequence spans 421 residues: Histidine--tRNA ligase (421 aa).

This sequence belongs to the class-II aminoacyl-tRNA synthetase family. As to quaternary structure, homodimer.

Its subcellular location is the cytoplasm. The enzyme catalyses tRNA(His) + L-histidine + ATP = L-histidyl-tRNA(His) + AMP + diphosphate + H(+). The chain is Histidine--tRNA ligase from Caldicellulosiruptor bescii (strain ATCC BAA-1888 / DSM 6725 / KCTC 15123 / Z-1320) (Anaerocellum thermophilum).